We begin with the raw amino-acid sequence, 243 residues long: Carboxy-S-adenosyl-L-methionine synthase (243 aa).

S-adenosyl-L-methionine is bound by residues Tyr-40, 65–67, 90–91, 118–119, Asn-133, and Arg-200; these read GCS, DN, and DI.

It belongs to the class I-like SAM-binding methyltransferase superfamily. Cx-SAM synthase family. As to quaternary structure, homodimer.

It carries out the reaction prephenate + S-adenosyl-L-methionine = carboxy-S-adenosyl-L-methionine + 3-phenylpyruvate + H2O. Catalyzes the conversion of S-adenosyl-L-methionine (SAM) to carboxy-S-adenosyl-L-methionine (Cx-SAM). This chain is Carboxy-S-adenosyl-L-methionine synthase, found in Shewanella woodyi (strain ATCC 51908 / MS32).